A 304-amino-acid chain; its full sequence is uncharacterized protein (304 aa).

Residues 136 to 137 (GI), 215 to 217 (VGR), and Asp-241 contribute to the NAD(+) site. Residue Arg-217 is part of the active site. Glu-246 is a catalytic residue. The Proton donor role is filled by His-265. Residue 265–268 (HTAN) coordinates NAD(+).

The protein belongs to the D-isomer specific 2-hydroxyacid dehydrogenase family.

This is an uncharacterized protein from Corynebacterium melassecola.